The primary structure comprises 220 residues: Pyridoxine/pyridoxamine 5'-phosphate oxidase (220 aa).

Substrate contacts are provided by residues 8-11 (RKSY) and Lys-66. Residues 61–66 (RVVLIK), 76–77 (FT), Arg-82, and Lys-83 each bind FMN. Residues Tyr-123, Arg-127, and Ser-131 each coordinate substrate. FMN contacts are provided by residues 140 to 141 (QS) and Trp-184. Substrate is bound at residue 190–192 (RLH). Arg-194 serves as a coordination point for FMN.

Belongs to the pyridoxamine 5'-phosphate oxidase family. Homodimer. FMN is required as a cofactor.

The catalysed reaction is pyridoxamine 5'-phosphate + O2 + H2O = pyridoxal 5'-phosphate + H2O2 + NH4(+). The enzyme catalyses pyridoxine 5'-phosphate + O2 = pyridoxal 5'-phosphate + H2O2. It functions in the pathway cofactor metabolism; pyridoxal 5'-phosphate salvage; pyridoxal 5'-phosphate from pyridoxamine 5'-phosphate: step 1/1. It participates in cofactor metabolism; pyridoxal 5'-phosphate salvage; pyridoxal 5'-phosphate from pyridoxine 5'-phosphate: step 1/1. Its function is as follows. Catalyzes the oxidation of either pyridoxine 5'-phosphate (PNP) or pyridoxamine 5'-phosphate (PMP) into pyridoxal 5'-phosphate (PLP). In Albidiferax ferrireducens (strain ATCC BAA-621 / DSM 15236 / T118) (Rhodoferax ferrireducens), this protein is Pyridoxine/pyridoxamine 5'-phosphate oxidase.